Reading from the N-terminus, the 179-residue chain is Peptide deformylase 2 (179 aa).

Fe cation contacts are provided by Cys101 and His143. Glu144 is an active-site residue. His147 contacts Fe cation.

It belongs to the polypeptide deformylase family. It depends on Fe(2+) as a cofactor.

It carries out the reaction N-terminal N-formyl-L-methionyl-[peptide] + H2O = N-terminal L-methionyl-[peptide] + formate. In terms of biological role, removes the formyl group from the N-terminal Met of newly synthesized proteins. Requires at least a dipeptide for an efficient rate of reaction. N-terminal L-methionine is a prerequisite for activity but the enzyme has broad specificity at other positions. The sequence is that of Peptide deformylase 2 from Pseudomonas syringae pv. tomato (strain ATCC BAA-871 / DC3000).